The primary structure comprises 476 residues: ENTH domain-containing protein C794.11c (476 aa).

The region spanning 30 to 154 is the ENTH domain; the sequence is YTSMEARVRE…VELLNDSERI (125 aa). Disordered regions lie at residues 157–198, 213–308, 410–429, and 444–472; these read ERKR…GSYR, NGYH…GFGD, QAGL…SGSN, and VHQE…LDND. Ser173 bears the Phosphoserine mark. Low complexity-rich tracts occupy residues 178-198 and 213-222; these read RIST…GSYR and NGYHDSSSMS. At Ser228 the chain carries Phosphoserine. Over residues 229-240 the composition is skewed to acidic residues; sequence DNDVEEYNEDGD. Tyr235 carries the phosphotyrosine modification. Residues Ser243 and Ser244 each carry the phosphoserine modification. The segment covering 262–271 has biased composition (basic and acidic residues); that stretch reads QSDKAPEQPK. A compositionally biased stretch (basic and acidic residues) spans 444–454; sequence VHQENSTRERV. Ser459 bears the Phosphoserine mark.

The protein is ENTH domain-containing protein C794.11c of Schizosaccharomyces pombe (strain 972 / ATCC 24843) (Fission yeast).